The primary structure comprises 693 residues: Polyribonucleotide nucleotidyltransferase (693 aa).

Residues Asp489 and Asp495 each contribute to the Mg(2+) site. In terms of domain architecture, KH spans 556–615 (PQIHVMNINPAKIKDVVGRGGATVKGIVEKTGAQIDTSDSGEVKVFAKDKKSMDMAVAMI). The S1 motif domain maps to 625-693 (GQVYKGKIVK…GRVKLSLVAR (69 aa)).

Belongs to the polyribonucleotide nucleotidyltransferase family. In terms of assembly, component of the RNA degradosome, which is a multiprotein complex involved in RNA processing and mRNA degradation. The cofactor is Mg(2+).

The protein localises to the cytoplasm. It carries out the reaction RNA(n+1) + phosphate = RNA(n) + a ribonucleoside 5'-diphosphate. Its function is as follows. Involved in mRNA degradation. Catalyzes the phosphorolysis of single-stranded polyribonucleotides processively in the 3'- to 5'-direction. This chain is Polyribonucleotide nucleotidyltransferase, found in Francisella tularensis subsp. holarctica (strain FTNF002-00 / FTA).